Reading from the N-terminus, the 1084-residue chain is Probable hemoglobin and hemoglobin-haptoglobin-binding protein 3 (1084 aa).

Positions methionine 1–alanine 24 are cleaved as a signal peptide. Repeat copies occupy residues glutamine 26 to asparagine 29, glutamine 30 to asparagine 33, glutamine 34 to asparagine 37, glutamine 38 to asparagine 41, glutamine 42 to asparagine 45, glutamine 46 to asparagine 49, glutamine 50 to asparagine 53, glutamine 54 to asparagine 57, glutamine 58 to asparagine 61, glutamine 62 to asparagine 65, glutamine 66 to asparagine 69, and glutamine 70 to asparagine 73. Positions glutamine 26–asparagine 73 are 12 X 4 AA tandem repeats of Q-P-T-N. Over residues glutamine 26–asparagine 75 the composition is skewed to low complexity. Positions glutamine 26–asparagine 77 are disordered. Positions glutamate 83–serine 90 match the TonB box motif. One can recognise a TBDR plug domain in the interval asparagine 95–lysine 220. The region spanning aspartate 228–phenylalanine 1084 is the TBDR beta-barrel domain. The short motif at asparagine 1067–phenylalanine 1084 is the TonB C-terminal box element.

This sequence belongs to the TonB-dependent receptor family. Hemoglobin/haptoglobin binding protein subfamily.

The protein localises to the cell outer membrane. Its function is as follows. Acts as a receptor for hemoglobin or the hemoglobin/haptoglobin complex of the human host and is required for heme uptake. The sequence is that of Probable hemoglobin and hemoglobin-haptoglobin-binding protein 3 from Haemophilus influenzae (strain ATCC 51907 / DSM 11121 / KW20 / Rd).